Here is a 322-residue protein sequence, read N- to C-terminus: Ubiquitin-conjugating enzyme E2 U (322 aa).

Positions 4-153 (RAYLLLQRDF…LKLFNRPLQM (150 aa)) constitute a UBC core domain. C89 serves as the catalytic Glycyl thioester intermediate.

The protein belongs to the ubiquitin-conjugating enzyme family. In terms of processing, autoubiquitinated in vitro in the presence of UBR5.

It catalyses the reaction S-ubiquitinyl-[E1 ubiquitin-activating enzyme]-L-cysteine + [E2 ubiquitin-conjugating enzyme]-L-cysteine = [E1 ubiquitin-activating enzyme]-L-cysteine + S-ubiquitinyl-[E2 ubiquitin-conjugating enzyme]-L-cysteine.. It functions in the pathway protein modification; protein ubiquitination. Its function is as follows. Catalyzes the covalent attachment of ubiquitin to other proteins. This Macaca fascicularis (Crab-eating macaque) protein is Ubiquitin-conjugating enzyme E2 U (UBE2U).